A 607-amino-acid chain; its full sequence is MEATSVFRPKLGSQFSLPSTTNLFPLRKLYGFPLTSFPGKPIKRIRLKATNTLTFDDKERTRKFKKLPLSEWTHYFHSIPLDISEMDALKEEIDELKPKVKNTFMSSQGSDSTKTKILMIYLFVSLGLAYHFEEEIYETLKEGFENIEKIMAGEEDLYTVSIIFWVFRRYGHYISSDVFQRFKGSNGSFKESLIGDAKGMLSLYEAAHLATTKDYILDEALIFTSSHLETLVATGTCPPHLLARIRNALSICQHWNFEVLVPLDFIPFYEQEKDHDEMLLKFAKLSFKYLKLIYLQDLKILTKWYKKLDFPSKFPPYFKDRCVENYFFVLPVFFEPQLSSARMLLTKGFILLGIQDDTFDRYASISEAESLGNSLKRWAPDHSMDKQPEYLKSVLKVILDTFQEFEKELSPEGRSYSVKYTIEEFQASSKANVELAKWAQVSHVPSFEKYMEVGQMEITACVTVAYILMSMGKTGTKEAFEWLKSRPKLVQSLCTKGRLMNDIAGFEDDMSRGYVVNAVNCYMKQYGVTEKEAFKELRKMVVNTHKTLNEEFLTTTCVSHYVLRETMDFARMIIVTYNGYEGFTRPDEGKIEEYMTSLFVDHTLKML.

Residues Asp356, Asp360, Asn501, and Asp509 each contribute to the Mg(2+) site. Residues 356 to 360 carry the DDXXD motif motif; sequence DDTFD.

This sequence belongs to the terpene synthase family. Tpsa subfamily. It depends on Mg(2+) as a cofactor. Requires Mn(2+) as cofactor. Predominantly expressed in roots but also in stems, leaves and flowers.

It is found in the cytoplasm. It functions in the pathway secondary metabolite biosynthesis; terpenoid biosynthesis. In terms of biological role, involved in terpene biosynthesis in roots. Possesses diterpene (C20) synthase activity in vitro. Does not seem to be involved in sesquiterpene (C15) biosynthesis. In Arabidopsis thaliana (Mouse-ear cress), this protein is Terpenoid synthase 9.